Reading from the N-terminus, the 524-residue chain is Bifunctional purine biosynthesis protein PurH (524 aa).

The region spanning Met-1–Val-145 is the MGS-like domain.

It belongs to the PurH family.

The enzyme catalyses (6R)-10-formyltetrahydrofolate + 5-amino-1-(5-phospho-beta-D-ribosyl)imidazole-4-carboxamide = 5-formamido-1-(5-phospho-D-ribosyl)imidazole-4-carboxamide + (6S)-5,6,7,8-tetrahydrofolate. The catalysed reaction is IMP + H2O = 5-formamido-1-(5-phospho-D-ribosyl)imidazole-4-carboxamide. The protein operates within purine metabolism; IMP biosynthesis via de novo pathway; 5-formamido-1-(5-phospho-D-ribosyl)imidazole-4-carboxamide from 5-amino-1-(5-phospho-D-ribosyl)imidazole-4-carboxamide (10-formyl THF route): step 1/1. It functions in the pathway purine metabolism; IMP biosynthesis via de novo pathway; IMP from 5-formamido-1-(5-phospho-D-ribosyl)imidazole-4-carboxamide: step 1/1. This is Bifunctional purine biosynthesis protein PurH from Cupriavidus metallidurans (strain ATCC 43123 / DSM 2839 / NBRC 102507 / CH34) (Ralstonia metallidurans).